The sequence spans 366 residues: 3-dehydroquinate synthase (366 aa).

NAD(+) contacts are provided by residues 69–74 (DGEAFK), 103–107 (GVIGD), 127–128 (TT), lysine 140, and lysine 149. The Zn(2+) site is built by glutamate 182, histidine 245, and histidine 262.

The protein belongs to the sugar phosphate cyclases superfamily. Dehydroquinate synthase family. Requires Co(2+) as cofactor. It depends on Zn(2+) as a cofactor. The cofactor is NAD(+).

It is found in the cytoplasm. The enzyme catalyses 7-phospho-2-dehydro-3-deoxy-D-arabino-heptonate = 3-dehydroquinate + phosphate. It functions in the pathway metabolic intermediate biosynthesis; chorismate biosynthesis; chorismate from D-erythrose 4-phosphate and phosphoenolpyruvate: step 2/7. Functionally, catalyzes the conversion of 3-deoxy-D-arabino-heptulosonate 7-phosphate (DAHP) to dehydroquinate (DHQ). This Pseudomonas fluorescens (strain Pf0-1) protein is 3-dehydroquinate synthase.